The chain runs to 265 residues: Acetylglutamate kinase (265 aa).

Residues 41–42 (GG), R63, and N156 contribute to the substrate site.

Belongs to the acetylglutamate kinase family. ArgB subfamily.

The protein localises to the cytoplasm. It carries out the reaction N-acetyl-L-glutamate + ATP = N-acetyl-L-glutamyl 5-phosphate + ADP. It participates in amino-acid biosynthesis; L-arginine biosynthesis; N(2)-acetyl-L-ornithine from L-glutamate: step 2/4. Catalyzes the ATP-dependent phosphorylation of N-acetyl-L-glutamate. The chain is Acetylglutamate kinase from Brevibacillus brevis (strain 47 / JCM 6285 / NBRC 100599).